The sequence spans 605 residues: NADH-ubiquinone oxidoreductase chain 5 (605 aa).

Transmembrane regions (helical) follow at residues 11 to 31 (ILITELLILALSALMTMLPPI), 49 to 69 (LSLTSILIHILIEEPSSISSL), 77 to 97 (LAMSIKIDYYSLIFISIALFI), 120 to 140 (MFLLLFLMSMIMFIAANNFFP), 141 to 161 (MLVGWGTMGLMSYLLISWWHG), 178 to 198 (LADIGFILTFSWCITYMSSLD), 202 to 222 (FFATSTLVTGVPILGMLMAAM), 244 to 264 (VSALLHSSTMVTAGVYLLIGM), 273 to 295 (GFSEACLTMGAATALYASFKALL), 302 to 322 (IIAFSTLSQLGFMMATVGLNH), 325 to 345 (LAFMHLCMHAFFKAMMFLCAG), 371 to 391 (ASCFTLSTLALAGFPFLTGFF), 408 to 425 (LWATMLLISTMFTAIYSL), 457 to 477 (LALASIVTGSLFSLFTPPIYT), 488 to 508 (LAALTLTFMSAFLAMYLISLA), and 584 to 604 (IKTYFMAFLVTFVIILYIMLF).

This sequence belongs to the complex I subunit 5 family.

It localises to the mitochondrion inner membrane. The enzyme catalyses a ubiquinone + NADH + 5 H(+)(in) = a ubiquinol + NAD(+) + 4 H(+)(out). Functionally, core subunit of the mitochondrial membrane respiratory chain NADH dehydrogenase (Complex I) that is believed to belong to the minimal assembly required for catalysis. Complex I functions in the transfer of electrons from NADH to the respiratory chain. The immediate electron acceptor for the enzyme is believed to be ubiquinone. The sequence is that of NADH-ubiquinone oxidoreductase chain 5 (MT-ND5) from Pelomedusa subrufa (African side-necked turtle).